Consider the following 466-residue polypeptide: MAKTLYEKLFDAHVVYEAQNETPLLYIDRHLVHEVTSPQAFDGLRAHGRQVRQPGKTFATMDHNVSTQTKDINASGEMARIQMQELIKNCKEFGVELYDLNHPYQGIVHVMGPEQGVTLPGMTIVCGDSHTATHGAFGALAFGIGTSEVEHVLATQTLKQGRAKTMKIDVQGKAAPGITAKDIVLAIIGKTGSAGGTGHVVEFCGEAIRDLSMEGRMTLCNMAIEMGAKAGLVAPDETTFNYVRGRLHAPKGKDFDDAVAYWKTLKTDDGATFDTVVTLQAAEIAPQVTWGTNPGQVISVTDNIPDPASFSDPVERASAEKALAYMGLKSGIPLTDVAIDKVFIGSCTNSRIEDLRAAAEIAKGRKVAPGVQALVVPGSGPVKAQAEAEGLDKIFIEAGFEWRLPGCSMCLAMNNDRLNPGERCASTSNRNFEGRQGRGGRTHLVSPAMAAAAAVTGHFADIRNLK.

[4Fe-4S] cluster is bound by residues C347, C407, and C410.

It belongs to the aconitase/IPM isomerase family. LeuC type 1 subfamily. Heterodimer of LeuC and LeuD. [4Fe-4S] cluster is required as a cofactor.

The enzyme catalyses (2R,3S)-3-isopropylmalate = (2S)-2-isopropylmalate. It functions in the pathway amino-acid biosynthesis; L-leucine biosynthesis; L-leucine from 3-methyl-2-oxobutanoate: step 2/4. Catalyzes the isomerization between 2-isopropylmalate and 3-isopropylmalate, via the formation of 2-isopropylmaleate. The polypeptide is 3-isopropylmalate dehydratase large subunit (Klebsiella pneumoniae (strain 342)).